The primary structure comprises 343 residues: UBP1-associated proteins 1A (343 aa).

Positions 1–61 (MAKTLDKSKK…SESDNEFDPE (61 aa)) are disordered. Over residues 28 to 49 (NKQQQQPESSTPYSSSSSSSDS) the composition is skewed to low complexity. A compositionally biased stretch (acidic residues) spans 50–61 (SDSESDNEFDPE). Residues 104–181 (RKIFVYGLPW…RTATCQLASM (78 aa)) form the RRM domain. The interval 312–343 (STYPDSDAGGKRGTGKDSDAGGSSFHGYSNYS) is disordered. The segment covering 319 to 330 (AGGKRGTGKDSD) has biased composition (basic and acidic residues).

In terms of assembly, interacts with UBA1A, UBA2A, UBP1A, UBP1B and UBP1C.

The protein localises to the nucleus. Functionally, acts as a component of a complex regulating the turnover of mRNAs in the nucleus. Binds with high affinity to RNA molecules that contain U-rich sequences in 3'-UTRs. May function in complex with UBP1 and contribute to the stabilization of mRNAs in the nucleus. However, unlike UBP1, UBA1A does not stimulate pre-mRNA splicing. The chain is UBP1-associated proteins 1A (UBA1A) from Arabidopsis thaliana (Mouse-ear cress).